Reading from the N-terminus, the 430-residue chain is Putative membrane fusion protein SilB (430 aa).

The first 28 residues, 1–28, serve as a signal peptide directing secretion; that stretch reads MASLKIKYAAIIISSLIAGGLISVTAWQ. A disordered region spans residues 407–430; the sequence is RHPEKTENSMPAMSEQPVNMHSGH. Over residues 414–430 the composition is skewed to polar residues; it reads NSMPAMSEQPVNMHSGH.

This sequence belongs to the membrane fusion protein (MFP) (TC 8.A.1) family.

Functionally, component of the sil cation efflux system that confers resistance to silver. May be part of a three-component cation/proton antiporter. The polypeptide is Putative membrane fusion protein SilB (silB) (Salmonella typhimurium).